The sequence spans 56 residues: Small ribosomal subunit protein uS14 (56 aa).

Zn(2+) is bound by residues C21, C24, C39, and C42.

The protein belongs to the universal ribosomal protein uS14 family. Component of the 40S small ribosomal subunit. Zn(2+) serves as cofactor.

The protein resides in the cytoplasm. The protein localises to the cytosol. Its subcellular location is the rough endoplasmic reticulum. Functionally, component of the small ribosomal subunit. The ribosome is a large ribonucleoprotein complex responsible for the synthesis of proteins in the cell. The chain is Small ribosomal subunit protein uS14 (rps29) from Hippocampus comes (Tiger tail seahorse).